The chain runs to 589 residues: V-type ATP synthase alpha chain 1 (589 aa).

Residue 239 to 246 participates in ATP binding; the sequence is GPFGAGKT.

This sequence belongs to the ATPase alpha/beta chains family.

The enzyme catalyses ATP + H2O + 4 H(+)(in) = ADP + phosphate + 5 H(+)(out). Produces ATP from ADP in the presence of a proton gradient across the membrane. The V-type alpha chain is a catalytic subunit. This Treponema pallidum (strain Nichols) protein is V-type ATP synthase alpha chain 1 (atpA1).